A 436-amino-acid polypeptide reads, in one-letter code: Protein Z-dependent protease inhibitor (436 aa).

Residues Met-1–Ser-20 form the signal peptide. Residues Asn-23, Asn-42, and Asn-69 are each glycosylated (N-linked (GlcNAc...) asparagine). The tract at residues Ala-128–Ser-145 is heparin-binding. N-linked (GlcNAc...) asparagine glycosylation is found at Asn-172, Asn-189, and Asn-287.

This sequence belongs to the serpin family. Phosphorylated by FAM20C in the extracellular medium. Expressed by the liver and secreted in plasma.

The protein resides in the secreted. Functionally, inhibits activity of the coagulation protease factor Xa in the presence of PROZ, calcium and phospholipids. Also inhibits factor XIa in the absence of cofactors. The polypeptide is Protein Z-dependent protease inhibitor (Serpina10) (Rattus norvegicus (Rat)).